The chain runs to 167 residues: Peptidoglycan L-alanyl-D-glutamate endopeptidase CwlK (167 aa).

Residues 1–26 (MNLPAKTFVILCILFLLDLCFSYIRH) form the signal peptide.

It belongs to the peptidase M15C family.

It localises to the cell membrane. Functionally, cleaves the linkage of the L-alanine-D-glutamic acid of B.subtilis cell wall. This Bacillus subtilis (strain 168) protein is Peptidoglycan L-alanyl-D-glutamate endopeptidase CwlK (cwlK).